Reading from the N-terminus, the 466-residue chain is Ribulose bisphosphate carboxylase large chain (466 aa).

The residue at position 5 (lysine 5) is an N6,N6,N6-trimethyllysine. The substrate site is built by asparagine 114 and threonine 164. Lysine 166 functions as the Proton acceptor in the catalytic mechanism. Lysine 168 serves as a coordination point for substrate. 3 residues coordinate Mg(2+): lysine 192, aspartate 194, and glutamate 195. Residue lysine 192 is modified to N6-carboxylysine. Histidine 285 (proton acceptor) is an active-site residue. 3 residues coordinate substrate: arginine 286, histidine 318, and serine 370.

This sequence belongs to the RuBisCO large chain family. Type I subfamily. Heterohexadecamer of 8 large chains and 8 small chains; disulfide-linked. The disulfide link is formed within the large subunit homodimers. Mg(2+) serves as cofactor. In terms of processing, the disulfide bond which can form in the large chain dimeric partners within the hexadecamer appears to be associated with oxidative stress and protein turnover.

The protein localises to the plastid. The protein resides in the chloroplast. The catalysed reaction is 2 (2R)-3-phosphoglycerate + 2 H(+) = D-ribulose 1,5-bisphosphate + CO2 + H2O. The enzyme catalyses D-ribulose 1,5-bisphosphate + O2 = 2-phosphoglycolate + (2R)-3-phosphoglycerate + 2 H(+). Functionally, ruBisCO catalyzes two reactions: the carboxylation of D-ribulose 1,5-bisphosphate, the primary event in carbon dioxide fixation, as well as the oxidative fragmentation of the pentose substrate in the photorespiration process. Both reactions occur simultaneously and in competition at the same active site. This Saururus cernuus (Lizard's tail) protein is Ribulose bisphosphate carboxylase large chain.